The primary structure comprises 510 residues: GMP synthase [glutamine-hydrolyzing] (510 aa).

A Glutamine amidotransferase type-1 domain is found at T5–D195. C82 functions as the Nucleophile in the catalytic mechanism. Catalysis depends on residues H169 and E171. Residues W196–R385 enclose the GMPS ATP-PPase domain. Residue S223–S229 coordinates ATP.

In terms of assembly, homodimer.

It carries out the reaction XMP + L-glutamine + ATP + H2O = GMP + L-glutamate + AMP + diphosphate + 2 H(+). Its pathway is purine metabolism; GMP biosynthesis; GMP from XMP (L-Gln route): step 1/1. Catalyzes the synthesis of GMP from XMP. This is GMP synthase [glutamine-hydrolyzing] from Syntrophomonas wolfei subsp. wolfei (strain DSM 2245B / Goettingen).